The primary structure comprises 305 residues: Ornithine carbamoyltransferase (305 aa).

Carbamoyl phosphate contacts are provided by residues 52 to 55 (STRT), Q79, R103, and 130 to 133 (HPLQ). L-ornithine contacts are provided by residues N162, D224, and 228-229 (SM). Carbamoyl phosphate is bound by residues 264–265 (CL) and R292.

It belongs to the aspartate/ornithine carbamoyltransferase superfamily. OTCase family.

It is found in the cytoplasm. The enzyme catalyses carbamoyl phosphate + L-ornithine = L-citrulline + phosphate + H(+). It participates in amino-acid biosynthesis; L-arginine biosynthesis; L-arginine from L-ornithine and carbamoyl phosphate: step 1/3. Reversibly catalyzes the transfer of the carbamoyl group from carbamoyl phosphate (CP) to the N(epsilon) atom of ornithine (ORN) to produce L-citrulline. The sequence is that of Ornithine carbamoyltransferase from Pyrobaculum aerophilum (strain ATCC 51768 / DSM 7523 / JCM 9630 / CIP 104966 / NBRC 100827 / IM2).